The following is a 690-amino-acid chain: Protein arginine N-methyltransferase 7 (690 aa).

SAM-dependent MTase PRMT-type domains follow at residues 14 to 357 (QNSW…YSLW) and 366 to 690 (TKSV…QKKL).

This sequence belongs to the class I-like SAM-binding methyltransferase superfamily. Protein arginine N-methyltransferase family. PRMT7 subfamily. Expressed at low level in ovary.

Functionally, essential arginine methyltransferase that can both catalyze the formation of omega-N monomethylarginine (MMA) and symmetrical dimethylarginine (sDMA). Specifically mediates the symmetrical dimethylation of arginine residues in the small nuclear ribonucleoproteins SmD1 and SmD3. The polypeptide is Protein arginine N-methyltransferase 7 (Art7) (Drosophila melanogaster (Fruit fly)).